A 440-amino-acid polypeptide reads, in one-letter code: Doublesex- and mab-3-related transcription factor A2 (440 aa).

Positions 59-106 (CARCRNHGVVSALKGHKRYCRWKDCMCAKCTLIAERQRVMAAQVALRR) form a DNA-binding region, DM. Residues 167–261 (PKTPLPGTVT…SPSSAASRQM (95 aa)) form a disordered region. Basic and acidic residues predominate over residues 199–213 (DMRHGSGSENGDRES). Residues 229-241 (TPGSISPIGSDSG) are compositionally biased toward low complexity. A compositionally biased stretch (polar residues) spans 251-261 (PSPSSAASRQM). Residues 261 to 296 (MNAIDILTRVFPNHKRSVLELVLQGCGKNVVQAIEQ) enclose the DMA domain.

Belongs to the DMRT family. In terms of tissue distribution, restrictively expressed in brain and developing germ cells, especially in spermatogonia, spermatocytes, spermatids, and sperm cells, and in developing oocytes, including early perinucleolus stage oocyte, late yolk vesicle stage oocyte, and oil drop stage oocyte.

The protein localises to the nucleus. May be involved in sexual development. This chain is Doublesex- and mab-3-related transcription factor A2 (dmrta2), found in Danio rerio (Zebrafish).